The chain runs to 1154 residues: Voltage-dependent calcium channel subunit alpha-2/delta-2 (1154 aa).

An N-terminal signal peptide occupies residues 1–18 (MAVPARTCGASWPGPVRT). The segment at 1–37 (MAVPARTCGASWPGPVRTARPWPGRGPRPCPDPRGPA) is disordered. The Extracellular segment spans residues 19–1116 (ARPWPGRGPR…TEDTSDCGRG (1098 aa)). The span at 24–34 (GRGPRPCPDPR) shows a compositional bias: pro residues. Residue asparagine 205 is glycosylated (N-linked (GlcNAc...) asparagine). The 179-residue stretch at 294–472 (DMVIIVDVSG…INTQEYLDVL (179 aa)) folds into the VWFA domain. Residues aspartate 300, serine 302, and serine 304 each contribute to the a divalent metal cation site. An MIDAS-like motif motif is present at residues 300–304 (DVSGS). 6 N-linked (GlcNAc...) asparagine glycosylation sites follow: asparagine 389, asparagine 421, asparagine 510, asparagine 543, asparagine 627, and asparagine 864. An intrachain disulfide couples cysteine 446 to cysteine 1101. One can recognise a Cache domain in the interval 488–577 (WTNVYEDALG…KPQTTNFREP (90 aa)). A helical membrane pass occupies residues 1117–1137 (ASFPPSLGVLVSLQLLLLLGL). At 1138–1154 (PPRPQPQVHSFAASRHL) the chain is on the cytoplasmic side.

It belongs to the calcium channel subunit alpha-2/delta family. Dimer formed of alpha-2-2 and delta-2 chains; disulfide-linked. Voltage-dependent calcium channels are multisubunit complexes, consisting of alpha-1 (CACNA1), alpha-2 (CACNA2D), beta (CACNB) and delta (CACNA2D) subunits in a 1:1:1:1 ratio. Post-translationally, N-glycosylated. In terms of processing, may be proteolytically processed into subunits alpha-2-2 and delta-2 that are disulfide-linked. It is however unclear whether such cleavage really takes place in vivo and has a functional role. According to PubMed:11306709, it is processed, at least in vitro, while according to PubMed:17052222, it is only poorly processed in vivo. As to expression, predominantly expressed in brain in a restricted pattern. Also expressed at lower level in kidney and testis Not expressed in lung at any moment of development. In brain, it localizes to sections of P21 brain. Expressed at high level in the cerebellum, with moderate levels in medulla, pons, and striatum. Also expressed in cortex, hippocampus, habenula and nucleus reticularis thalami (nRT). Strongly expressed in cerebellar Purkinje cells.

It localises to the membrane. Its function is as follows. The alpha-2/delta subunit of voltage-dependent calcium channels regulates calcium current density and activation/inactivation kinetics of the calcium channel. Acts as a regulatory subunit for P/Q-type calcium channel (CACNA1A), N-type (CACNA1B), L-type (CACNA1C OR CACNA1D) and possibly T-type (CACNA1G). This is Voltage-dependent calcium channel subunit alpha-2/delta-2 (Cacna2d2) from Mus musculus (Mouse).